The chain runs to 379 residues: Armadillo repeat-containing X-linked protein 3 (379 aa).

Residues 1-6 (MGYARK) lie on the Mitochondrial intermembrane side of the membrane. Mitochondrion outer membrane (MOM)-targeting sequence regions lie at residues 1–6 (MGYARK) and 26–37 (RLTRGRKQNKEK). A helical; Signal-anchor transmembrane segment spans residues 7 to 29 (VGWVTAGLVIGAGACYCIYRLTR). Over 30–379 (GRKQNKEKMA…TERMFPKSQE (350 aa)) the chain is Cytoplasmic. 3 positions are modified to phosphoserine: serine 61, serine 67, and serine 72. The nuclear localization signal stretch occupies residues 89–98 (RARARARARA). The segment covering 95–106 (RARATRARRAVQ) has biased composition (basic residues). Residues 95–116 (RARATRARRAVQKRASPNSDDT) are disordered. Serine 110 is modified (phosphoserine). ARM repeat units follow at residues 111-151 (PNSD…NNAA), 153-192 (AFNRDIIRDLGGLPIVAKILNTRDPIVKEKALIVLNNLSV), and 233-272 (VTNEYQHILANSISDFFRLFSAGNEETKLQVLKLLLNLAE).

Belongs to the eutherian X-chromosome-specific Armcx family. As to quaternary structure, interacts (via ARM domain) with MIRO1, MIRO2 and TRAK2. The interaction with Miro is calcium-dependent. Interacts with Sox10. Highly expressed in the developing neural tissues, neural crest derivatives and hind limbs. Also widely expressed in the adult nervous tissue, especially in the forebrain, including the cerebral cortex, hippocampus and thalamus.

It is found in the mitochondrion outer membrane. The protein localises to the cytoplasm. It localises to the nucleus. In terms of biological role, regulates mitochondrial aggregation and transport in axons in living neurons. May link mitochondria to the Trak2-kinesin motor complex via its interaction with Miro and Trak2. Mitochondrial distribution and dynamics is regulated through Armcx3 protein degradation, which is promoted by PCK and negatively regulated by Wnt1. Enhances the Sox10-mediated transactivation of the neuronal acetylcholine receptor subunit alpha-3 and beta-4 subunit gene promoters. This chain is Armadillo repeat-containing X-linked protein 3 (Armcx3), found in Mus musculus (Mouse).